The chain runs to 107 residues: MKRTNKIKGTLERPRLSVFRSNCHIYAQVIDDSSGMTIVSTSTLDKDVKSLLNNTSTCEASKIVGQVIAKKTLARNIKQVIFDRGKRVYHGRISALAEAARESGLEF.

It belongs to the universal ribosomal protein uL18 family. As to quaternary structure, part of the 50S ribosomal subunit; contacts the 5S rRNA.

The protein resides in the plastid. It is found in the chloroplast. Binds 5S rRNA, forms part of the central protuberance of the 50S subunit. This Guillardia theta (Cryptophyte) protein is Large ribosomal subunit protein uL18c (rpl18).